The chain runs to 205 residues: Protein-L-isoaspartate O-methyltransferase (205 aa).

The active site involves serine 56.

Belongs to the methyltransferase superfamily. L-isoaspartyl/D-aspartyl protein methyltransferase family.

The protein resides in the cytoplasm. It carries out the reaction [protein]-L-isoaspartate + S-adenosyl-L-methionine = [protein]-L-isoaspartate alpha-methyl ester + S-adenosyl-L-homocysteine. Catalyzes the methyl esterification of L-isoaspartyl residues in peptides and proteins that result from spontaneous decomposition of normal L-aspartyl and L-asparaginyl residues. It plays a role in the repair and/or degradation of damaged proteins. The protein is Protein-L-isoaspartate O-methyltransferase of Aeromonas hydrophila subsp. hydrophila (strain ATCC 7966 / DSM 30187 / BCRC 13018 / CCUG 14551 / JCM 1027 / KCTC 2358 / NCIMB 9240 / NCTC 8049).